We begin with the raw amino-acid sequence, 427 residues long: UDP-N-acetylglucosamine 1-carboxyvinyltransferase 1 (427 aa).

24-25 lines the phosphoenolpyruvate pocket; that stretch reads KN. Position 97 (Arg-97) interacts with UDP-N-acetyl-alpha-D-glucosamine. Cys-121 acts as the Proton donor in catalysis. Cys-121 is subject to 2-(S-cysteinyl)pyruvic acid O-phosphothioketal. Residues 126–130, Asp-309, and Val-331 each bind UDP-N-acetyl-alpha-D-glucosamine; that span reads RPIDL.

Belongs to the EPSP synthase family. MurA subfamily.

Its subcellular location is the cytoplasm. The enzyme catalyses phosphoenolpyruvate + UDP-N-acetyl-alpha-D-glucosamine = UDP-N-acetyl-3-O-(1-carboxyvinyl)-alpha-D-glucosamine + phosphate. It participates in cell wall biogenesis; peptidoglycan biosynthesis. In terms of biological role, cell wall formation. Adds enolpyruvyl to UDP-N-acetylglucosamine. This is UDP-N-acetylglucosamine 1-carboxyvinyltransferase 1 from Lactococcus lactis subsp. lactis (strain IL1403) (Streptococcus lactis).